The sequence spans 563 residues: BOS complex subunit NCLN (563 aa).

An N-terminal signal peptide occupies residues 1–42 (MLEEAGEVLENVLKASCLPLGFIVFLPAVLLLVAPPLPAADA). The Lumenal segment spans residues 43–522 (AHEFTVYRMQ…VMNAYRVKPA (480 aa)). 2 N-linked (GlcNAc...) asparagine glycosylation sites follow: Asn241 and Asn428. A helical membrane pass occupies residues 523–543 (IFDLLLALCIGAYLGMAYTAV). At 544–563 (QHFHVLYKTVQRLLLKAKAQ) the chain is on the cytoplasmic side.

It belongs to the nicastrin family. In terms of assembly, component of the back of Sec61 (BOS) complex, composed of NCLN/Nicalin, NOMO1 and TMEM147. The BOS complex is part of the multi-pass translocon (MPT) complex, composed of three subcomplexes, the GEL complex (composed of RAB5IF/OPTI and TMCO1), the BOS complex (composed of NCLN/Nicalin, NOMO1 and TMEM147) and the PAT complex (composed of WDR83OS/Asterix and CCDC47). The MPT complex associates with the SEC61 complex.

Its subcellular location is the endoplasmic reticulum membrane. Component of the multi-pass translocon (MPT) complex that mediates insertion of multi-pass membrane proteins into the lipid bilayer of membranes. The MPT complex takes over after the SEC61 complex: following membrane insertion of the first few transmembrane segments of proteins by the SEC61 complex, the MPT complex occludes the lateral gate of the SEC61 complex to promote insertion of subsequent transmembrane regions. May antagonize Nodal signaling and subsequent organization of axial structures during mesodermal patterning, via its interaction with NOMO. The sequence is that of BOS complex subunit NCLN (Ncln) from Rattus norvegicus (Rat).